The chain runs to 407 residues: Carbamoyl phosphate synthase small chain (407 aa).

The segment at 1–203 is CPSase; sequence MSQNESGTIA…EPCGEYEGKE (203 aa). Residues S61, G255, and G257 each coordinate L-glutamine. The Glutamine amidotransferase type-1 domain maps to 207 to 405; the sequence is TVAAVDLGIK…CELMKNNSKE (199 aa). C283 (nucleophile) is an active-site residue. Positions 284, 287, 325, 327, and 328 each coordinate L-glutamine. Residues H378 and E380 contribute to the active site.

The protein belongs to the CarA family. Composed of two chains; the small (or glutamine) chain promotes the hydrolysis of glutamine to ammonia, which is used by the large (or ammonia) chain to synthesize carbamoyl phosphate. Tetramer of heterodimers (alpha,beta)4.

It catalyses the reaction hydrogencarbonate + L-glutamine + 2 ATP + H2O = carbamoyl phosphate + L-glutamate + 2 ADP + phosphate + 2 H(+). The catalysed reaction is L-glutamine + H2O = L-glutamate + NH4(+). The protein operates within amino-acid biosynthesis; L-arginine biosynthesis; carbamoyl phosphate from bicarbonate: step 1/1. It participates in pyrimidine metabolism; UMP biosynthesis via de novo pathway; (S)-dihydroorotate from bicarbonate: step 1/3. Its function is as follows. Small subunit of the glutamine-dependent carbamoyl phosphate synthetase (CPSase). CPSase catalyzes the formation of carbamoyl phosphate from the ammonia moiety of glutamine, carbonate, and phosphate donated by ATP, constituting the first step of 2 biosynthetic pathways, one leading to arginine and/or urea and the other to pyrimidine nucleotides. The small subunit (glutamine amidotransferase) binds and cleaves glutamine to supply the large subunit with the substrate ammonia. The polypeptide is Carbamoyl phosphate synthase small chain (Bifidobacterium longum (strain DJO10A)).